The primary structure comprises 313 residues: Cytochrome f (313 aa).

The first 30 residues, 1–30 (MRNWSFSKAALTVSLLALSWSPFGPAEVQA), serve as a signal peptide directing secretion. The heme site is built by Tyr-31, Cys-51, Cys-54, and His-55. A helical transmembrane segment spans residues 279-298 (VQGLIIFFAFVLIAQVFLVL).

The protein belongs to the cytochrome f family. The 4 large subunits of the cytochrome b6-f complex are cytochrome b6, subunit IV (17 kDa polypeptide, petD), cytochrome f and the Rieske protein, while the 4 small subunits are PetG, PetL, PetM and PetN. The complex functions as a dimer. Requires heme as cofactor.

It localises to the plastid. Its subcellular location is the chloroplast thylakoid membrane. Its function is as follows. Component of the cytochrome b6-f complex, which mediates electron transfer between photosystem II (PSII) and photosystem I (PSI), cyclic electron flow around PSI, and state transitions. This is Cytochrome f from Nephroselmis olivacea (Green alga).